Reading from the N-terminus, the 174-residue chain is NAD(P)H-quinone oxidoreductase subunit J (174 aa).

Belongs to the complex I 30 kDa subunit family. NDH-1 can be composed of about 15 different subunits; different subcomplexes with different compositions have been identified which probably have different functions.

Its subcellular location is the cellular thylakoid membrane. The catalysed reaction is a plastoquinone + NADH + (n+1) H(+)(in) = a plastoquinol + NAD(+) + n H(+)(out). It carries out the reaction a plastoquinone + NADPH + (n+1) H(+)(in) = a plastoquinol + NADP(+) + n H(+)(out). Its function is as follows. NDH-1 shuttles electrons from an unknown electron donor, via FMN and iron-sulfur (Fe-S) centers, to quinones in the respiratory and/or the photosynthetic chain. The immediate electron acceptor for the enzyme in this species is believed to be plastoquinone. Couples the redox reaction to proton translocation, and thus conserves the redox energy in a proton gradient. Cyanobacterial NDH-1 also plays a role in inorganic carbon-concentration. This is NAD(P)H-quinone oxidoreductase subunit J from Picosynechococcus sp. (strain ATCC 27264 / PCC 7002 / PR-6) (Agmenellum quadruplicatum).